The sequence spans 202 residues: Securin (202 aa).

Ala-2 is modified (N-acetylalanine). A disordered region spans residues 35-94; sequence LDGRSQVSTPRFGKTFDAPPALPKATRKALGTVNRATEKSVKTKGPLKQKQPSFSAKKMT. The D-box motif lies at 61–64; sequence RKAL. 2 consecutive short sequence motifs (TEK-box) follow at residues 71-73 and 94-96; these read TEK. The SH3-binding signature appears at 163-173; it reads PPSPVRMPSPP. Residue Ser-165 is modified to Phosphoserine; by CDK1.

Belongs to the securin family. In terms of assembly, interacts with RPS10 and DNAJA1. Interacts with the caspase-like ESPL1, and prevents its protease activity probably by covering its active site. Interacts with TP53 and blocks its activity probably by blocking its binding to DNA. Interacts with the Ku 70 kDa subunit of ds-DNA kinase. Interacts with PTTG1IP. Phosphorylated at Ser-165 by CDK1 during mitosis. In terms of processing, phosphorylated in vitro by ds-DNA kinase. Post-translationally, ubiquitinated through 'Lys-11' linkage of ubiquitin moieties by the anaphase promoting complex (APC) at the onset of anaphase, conducting to its degradation. 'Lys-11'-linked ubiquitination is mediated by the E2 ligase UBE2C/UBCH10.

The protein localises to the cytoplasm. Its subcellular location is the nucleus. Regulatory protein, which plays a central role in chromosome stability, in the p53/TP53 pathway, and DNA repair. Probably acts by blocking the action of key proteins. During the mitosis, it blocks Separase/ESPL1 function, preventing the proteolysis of the cohesin complex and the subsequent segregation of the chromosomes. At the onset of anaphase, it is ubiquitinated, conducting to its destruction and to the liberation of ESPL1. Its function is however not limited to a blocking activity, since it is required to activate ESPL1. Negatively regulates the transcriptional activity and related apoptosis activity of TP53. The negative regulation of TP53 may explain the strong transforming capability of the protein when it is overexpressed. May also play a role in DNA repair via its interaction with Ku, possibly by connecting DNA damage-response pathways with sister chromatid separation. In Gorilla gorilla gorilla (Western lowland gorilla), this protein is Securin (PTTG1).